The chain runs to 314 residues: Olfactory receptor 5B3 (314 aa).

The Extracellular portion of the chain corresponds to 1–23; sequence MENKTEVTQFILLGLTNDSELQV. Residues asparagine 3 and asparagine 17 are each glycosylated (N-linked (GlcNAc...) asparagine). The chain crosses the membrane as a helical span at residues 24–44; sequence PLFITFPFIYIITLVGNLGII. The Cytoplasmic segment spans residues 45-52; that stretch reads VLIFWDSC. A helical transmembrane segment spans residues 53–73; sequence LHNPMYFFLSNLSLVDFCYSS. At 74 to 97 the chain is on the extracellular side; it reads AVTPIVMAGFLIEDKVISYNACAA. The cysteines at positions 95 and 187 are disulfide-linked. The chain crosses the membrane as a helical span at residues 98–118; it reads QMYIFVAFATVENYLLASMAY. At 119–131 the chain is on the cytoplasmic side; the sequence is DRYAAVCKPLHYT. Residues 132-152 traverse the membrane as a helical segment; the sequence is TTMTTTVCARLAIGSYLCGFL. A glycan (N-linked (GlcNAc...) asparagine) is linked at asparagine 153. Topologically, residues 153 to 194 are extracellular; it reads NASIHTGDTFSLSFCKSNEVHHFFCDIPAVMVLSCSDRHISE. Residues 195–215 form a helical membrane-spanning segment; sequence LVLIYVVSFNIFIALLVILIS. Residues 216–235 lie on the Cytoplasmic side of the membrane; it reads YTFIFITILKMHSASVYQKP. The helical transmembrane segment at 236–256 threads the bilayer; that stretch reads LSTCASHFIAVGIFYGTIIFM. Over 257-269 the chain is Extracellular; that stretch reads YLQPSSSHSMDTD. Residues 270-290 form a helical membrane-spanning segment; sequence KMAPVFYTMVIPMLNPLVYSL. Topologically, residues 291 to 314 are cytoplasmic; it reads RNKEVKSAFKKVVEKAKLSVGWSV.

It belongs to the G-protein coupled receptor 1 family.

It is found in the cell membrane. In terms of biological role, odorant receptor. This chain is Olfactory receptor 5B3 (OR5B3), found in Homo sapiens (Human).